The chain runs to 455 residues: Exodeoxyribonuclease 7 large subunit (455 aa).

The protein belongs to the XseA family. Heterooligomer composed of large and small subunits.

Its subcellular location is the cytoplasm. It catalyses the reaction Exonucleolytic cleavage in either 5'- to 3'- or 3'- to 5'-direction to yield nucleoside 5'-phosphates.. Bidirectionally degrades single-stranded DNA into large acid-insoluble oligonucleotides, which are then degraded further into small acid-soluble oligonucleotides. The protein is Exodeoxyribonuclease 7 large subunit of Escherichia coli (strain SMS-3-5 / SECEC).